The following is a 428-amino-acid chain: tRNA(Ile)-lysidine synthase (428 aa).

Residue 28 to 33 participates in ATP binding; sequence SGGVDS.

Belongs to the tRNA(Ile)-lysidine synthase family.

The protein localises to the cytoplasm. It carries out the reaction cytidine(34) in tRNA(Ile2) + L-lysine + ATP = lysidine(34) in tRNA(Ile2) + AMP + diphosphate + H(+). Its function is as follows. Ligates lysine onto the cytidine present at position 34 of the AUA codon-specific tRNA(Ile) that contains the anticodon CAU, in an ATP-dependent manner. Cytidine is converted to lysidine, thus changing the amino acid specificity of the tRNA from methionine to isoleucine. This is tRNA(Ile)-lysidine synthase from Streptococcus pyogenes serotype M3 (strain ATCC BAA-595 / MGAS315).